Reading from the N-terminus, the 222-residue chain is 7-cyano-7-deazaguanine synthase (222 aa).

Position 11 to 21 (11 to 21 (LSGGMDSAVLL)) interacts with ATP. Positions 192, 200, 203, and 206 each coordinate Zn(2+).

The protein belongs to the QueC family. Zn(2+) is required as a cofactor.

The catalysed reaction is 7-carboxy-7-deazaguanine + NH4(+) + ATP = 7-cyano-7-deazaguanine + ADP + phosphate + H2O + H(+). Its pathway is purine metabolism; 7-cyano-7-deazaguanine biosynthesis. In terms of biological role, catalyzes the ATP-dependent conversion of 7-carboxy-7-deazaguanine (CDG) to 7-cyano-7-deazaguanine (preQ(0)). The sequence is that of 7-cyano-7-deazaguanine synthase from Sulfurihydrogenibium sp. (strain YO3AOP1).